The chain runs to 230 residues: Large ribosomal subunit protein uL1 (230 aa).

It belongs to the universal ribosomal protein uL1 family. As to quaternary structure, part of the 50S ribosomal subunit.

Binds directly to 23S rRNA. The L1 stalk is quite mobile in the ribosome, and is involved in E site tRNA release. Its function is as follows. Protein L1 is also a translational repressor protein, it controls the translation of the L11 operon by binding to its mRNA. The protein is Large ribosomal subunit protein uL1 of Methylobacillus flagellatus (strain ATCC 51484 / DSM 6875 / VKM B-1610 / KT).